The chain runs to 245 residues: 5'-nucleotidase SurE (245 aa).

A divalent metal cation is bound by residues D8, D9, S39, and N91.

The protein belongs to the SurE nucleotidase family. Requires a divalent metal cation as cofactor.

It is found in the cytoplasm. It catalyses the reaction a ribonucleoside 5'-phosphate + H2O = a ribonucleoside + phosphate. Its function is as follows. Nucleotidase that shows phosphatase activity on nucleoside 5'-monophosphates. The protein is 5'-nucleotidase SurE of Herminiimonas arsenicoxydans.